The sequence spans 102 residues: Transcription factor UPBEAT1 (102 aa).

The region spanning 32–82 (IRPRKSVEASRRPCRAIHRRVKTLKELVPNTKTSEGLDGLFRQTADYILAL) is the bHLH domain.

Homodimer. In terms of tissue distribution, expressed in the root vascular tissue and in root hairs and lateral root caps. Detected at the protein level in all cell files in the elongation zone.

Its subcellular location is the nucleus. Its function is as follows. Transcription factor that modulates the balance between cellular proliferation and differentiation in root growth. Does not act through cytokinin and auxin signaling, but by repressing peroxidase expression in the elongation zone. The polypeptide is Transcription factor UPBEAT1 (UPB1) (Arabidopsis thaliana (Mouse-ear cress)).